A 119-amino-acid polypeptide reads, in one-letter code: Large ribosomal subunit protein uL18 (119 aa).

Belongs to the universal ribosomal protein uL18 family. As to quaternary structure, part of the 50S ribosomal subunit; part of the 5S rRNA/L5/L18/L25 subcomplex. Contacts the 5S and 23S rRNAs.

This is one of the proteins that bind and probably mediate the attachment of the 5S RNA into the large ribosomal subunit, where it forms part of the central protuberance. This is Large ribosomal subunit protein uL18 from Staphylococcus aureus (strain bovine RF122 / ET3-1).